Here is a 172-residue protein sequence, read N- to C-terminus: Large ribosomal subunit protein uL10 (172 aa).

It belongs to the universal ribosomal protein uL10 family. Part of the ribosomal stalk of the 50S ribosomal subunit. The N-terminus interacts with L11 and the large rRNA to form the base of the stalk. The C-terminus forms an elongated spine to which L12 dimers bind in a sequential fashion forming a multimeric L10(L12)X complex.

Its function is as follows. Forms part of the ribosomal stalk, playing a central role in the interaction of the ribosome with GTP-bound translation factors. The sequence is that of Large ribosomal subunit protein uL10 from Rhizobium johnstonii (strain DSM 114642 / LMG 32736 / 3841) (Rhizobium leguminosarum bv. viciae).